An 822-amino-acid polypeptide reads, in one-letter code: Dextranase (822 aa).

An N-terminal signal peptide occupies residues 1–38 (MTVNLTLQHASEIIGQDNVDLTLAAGASAKVSNLTVAS). Disordered regions lie at residues 607 to 669 (EPVT…VDEL) and 683 to 788 (ETAH…ETTS). Residues 619–636 (NTVTSEASSETAKSENTT) show a composition bias toward low complexity. Positions 693–705 (SVSNTDQGTVASD) are enriched in polar residues. Low complexity predominate over residues 706-761 (SITTPASEAASTAASTVSSEVSESVTVSSEPSETENSSEASTSESATPTTTAISES). Residues 771–788 (LTESESQASTSLVSETTS) are compositionally biased toward polar residues.

It belongs to the glycosyl hydrolase 66 family.

The catalysed reaction is Endohydrolysis of (1-&gt;6)-alpha-D-glucosidic linkages in dextran.. This chain is Dextranase (dex), found in Streptococcus salivarius.